Consider the following 804-residue polypeptide: MKMVSLIALLVFATGAQAAPIASKAPAHQPTGSDLPPLPAAAPVAPAAQPSAQAVDPASAAPASDAGSASNADAILDNAENAAGVGTDVATVHTYSLQELGAQSALTMRGAAPLQGLQFGIPADQLVTSARLVVSGAMSPNLQPDNSAVTITLNEQYIGTLRPDPTHPAFGPLSFDINPIFFVSGNRLNFNFASGSKGCADPTNGLQWASVSEHSQLQITTIPLPPRRQLARLPQPFFDKTVRQKVVIPFVLAQTFDPEVLKASGIIASWFGQQTDFRGVNFPVFSTIPQTGNAIVVGVADELPAALGRPSVSGPTLMEVANPSDPNGTVLLVTGRDRDEVITASKGIGFGSSALPVASRMDVAPIDVAPRLANDAPSFIPTSRPVRLGELVPVSALQGEGYTPGVLSVPFRVSPDLYTWRDRPYKLNVRFRAPDGPILDVARSHLDVGINNTYLQSYSLREQSSVVDQLLRRVGVGTQNAGVEQHTLTIPPWMVFGQDQLQFYFDAAPLAQPGCRPGPSLIHMSVDPDSTIDLSNAYHITRMPNLAYMASAGYPFTTYADLSRSAVVLPDHPNGTVVSAYLDLMGFMGATTWYPVSGVDIVSADHVSDVADRNLIVLSTLSNSADVSALLANSAYQISDGRLHMGLRSTLSGVWNIFQDPMSVMSNTHPTEVETTLSGGVGAMVEAESPLASGRTVLALLSGDGQGLDNLVQILGQRKNQAKVQGDLVLAHGDDLTSYRSSPLYTVGTVPLWLIPDWYMHNHPFRVIVVGLVGCLLVVAVLVRALFRHAMFRRRQLQEERQKS.

Residues M1 to A18 form the signal peptide. Topologically, residues A19–R766 are periplasmic. Residues K24–A69 are disordered. Residues V767 to F787 traverse the membrane as a helical segment. The Cytoplasmic portion of the chain corresponds to R788–S804.

This sequence belongs to the AcsB/BcsB family. In terms of assembly, tightly associated with the cellulose synthase catalytic subunit.

The protein resides in the cell inner membrane. The protein operates within glycan metabolism; bacterial cellulose biosynthesis. In terms of biological role, binds the cellulose synthase activator, bis-(3'-5') cyclic diguanylic acid (c-di-GMP). The sequence is that of Cyclic di-GMP-binding protein (bcsBI) from Komagataeibacter xylinus (Gluconacetobacter xylinus).